The sequence spans 525 residues: Protein shisa-6 (525 aa).

A signal peptide spans 1 to 30; it reads MALRRLLLPPLLLSLLLSLASLHLPPGADA. Residues 31–180 lie on the Extracellular side of the membrane; it reads ARGRSGNRTL…NKYDPEKDKT (150 aa). Residues asparagine 37 and asparagine 62 are each glycosylated (N-linked (GlcNAc...) asparagine). Residues 181 to 201 traverse the membrane as a helical segment; it reads NFTVYITCGVIAFVIVAGVFA. The Cytoplasmic segment spans residues 202-525; sequence KVSYDKAHRP…YTASKTEVTV (324 aa). Residues 241–294 are disordered; that stretch reads ISAIDTSPKENTPVRSTSKNHYTPVRTAKQTPGDRQYNHPILSSATQTPTHEKP. Residues 243-261 show a composition bias toward polar residues; sequence AIDTSPKENTPVRSTSKNH. A phosphoserine mark is found at serine 416, serine 422, and serine 434. Threonine 458 carries the phosphothreonine modification. Residues 469–495 are disordered; it reads MHSHPSASNNSYATLGQSQTAAKRHAF. The segment covering 473 to 489 has biased composition (polar residues); it reads PSASNNSYATLGQSQTA. Position 502 is a phosphothreonine (threonine 502). The short motif at 522-525 is the PDZ-binding element; that stretch reads EVTV.

It belongs to the shisa family. As to quaternary structure, component of the postsynaptic hippocampal AMPA-type glutamate receptor (AMPAR) complex, at least composed of pore forming AMPAR subunits GRIA1, GRIA2 and GRIA3 and AMPAR auxiliary proteins SHISA6 and SHISA7. Interacts (via PDZ-binding motif) with DLG4/PSD-95 (via PDZ domain); the interaction is direct. Post-translationally, N-glycosylated. Highly expressed in cerebellum and hippocampal neurons: CA1 stratum oriens and stratum radiatum, CA3 stratum oriens and stratum lucidum, and the dentate gyrus polymorphic layer. Expressed in other brain structures including olfactory bulb, cortex, amygdala and midbrain (at protein level). Also expressed in a subset of spermatogonial stem cells. Also expressed in eye, heart, kidney, lung, muscle and spleen. Isoform 2: Specifically expressed in hippocampus.

It is found in the postsynaptic density membrane. In terms of biological role, involved in maintenance of high-frequency synaptic transmission at hippocampal CA3-CA1 synapses. Regulates AMPA-type glutamate receptor (AMPAR) immobilization at postsynaptic density keeping the channels in an activated state in the presence of glutamate and preventing synaptic depression. May play a role in self-renewal and differentiation of spermatogonial stem cells by inhibiting canonical Wnt signaling pathway. In Mus musculus (Mouse), this protein is Protein shisa-6.